Reading from the N-terminus, the 621-residue chain is Probable potassium transport system protein Kup 2 (621 aa).

Helical transmembrane passes span 9 to 29 (MAGL…TSPL), 48 to 68 (IFGI…VKYV), 101 to 121 (IVLL…ITPA), 136 to 156 (SGME…LFLL), 164 to 184 (VGLM…ILGL), 210 to 230 (GFHA…AEAL), 246 to 266 (WFSL…ALLM), 275 to 295 (PFFL…ATLA), 336 to 356 (IYMP…VLTF), 364 to 384 (AAYG…FFVV), 393 to 413 (LPLA…FFAA), and 418 to 438 (VADG…LMST).

It belongs to the HAK/KUP transporter (TC 2.A.72) family.

The protein localises to the cell inner membrane. It catalyses the reaction K(+)(in) + H(+)(in) = K(+)(out) + H(+)(out). Its function is as follows. Transport of potassium into the cell. Likely operates as a K(+):H(+) symporter. This Chromobacterium violaceum (strain ATCC 12472 / DSM 30191 / JCM 1249 / CCUG 213 / NBRC 12614 / NCIMB 9131 / NCTC 9757 / MK) protein is Probable potassium transport system protein Kup 2.